The following is a 263-amino-acid chain: Acetylglutamate kinase (263 aa).

Substrate is bound by residues 48-49, R70, and N162; that span reads GG.

The protein belongs to the acetylglutamate kinase family. ArgB subfamily.

It localises to the cytoplasm. The enzyme catalyses N-acetyl-L-glutamate + ATP = N-acetyl-L-glutamyl 5-phosphate + ADP. Its pathway is amino-acid biosynthesis; L-arginine biosynthesis; N(2)-acetyl-L-ornithine from L-glutamate: step 2/4. Catalyzes the ATP-dependent phosphorylation of N-acetyl-L-glutamate. In Vibrio campbellii (strain ATCC BAA-1116), this protein is Acetylglutamate kinase.